We begin with the raw amino-acid sequence, 159 residues long: Insertion element IS136 uncharacterized 16.9 kDa protein (159 aa).

Residues 126 to 142 (RSFVSPSSSTPSTARSS) are compositionally biased toward low complexity. The disordered stretch occupies residues 126–159 (RSFVSPSSSTPSTARSSPGRPLPMQAFPAQTCAT).

This is Insertion element IS136 uncharacterized 16.9 kDa protein from Agrobacterium tumefaciens (strain T37).